The chain runs to 610 residues: Zinc metalloproteinase-disintegrin-like bothropasin (610 aa).

The signal sequence occupies residues 1–20; that stretch reads MIEVLLVTICLAAFPYQGSS. Residues 21–191 constitute a propeptide that is removed on maturation; it reads IILESGNVND…ASQLVVTAEQ (171 aa). Glutamine 192 is subject to Pyrrolidone carboxylic acid. A Peptidase M12B domain is found at 198 to 394; sequence RYVELFIVVD…ENPQCILNEP (197 aa). Residues glutamate 201 and aspartate 285 each contribute to the Ca(2+) site. Disulfide bonds link cysteine 309–cysteine 389, cysteine 349–cysteine 373, and cysteine 351–cysteine 356. Histidine 334 contributes to the Zn(2+) binding site. Glutamate 335 is a catalytic residue. 2 residues coordinate Zn(2+): histidine 338 and histidine 344. An N-linked (GlcNAc...) asparagine glycan is attached at asparagine 372. Residues cysteine 389, asparagine 392, valine 404, asparagine 407, leucine 409, glutamate 411, glutamate 414, and aspartate 417 each contribute to the Ca(2+) site. The region spanning 402–488 is the Disintegrin domain; it reads PPVCGNELLE…ECPADVFHKN (87 aa). Disulfide bonds link cysteine 405–cysteine 424, cysteine 405–cysteine 434, cysteine 416–cysteine 429, cysteine 416–cysteine 434, cysteine 418–cysteine 424, cysteine 428–cysteine 451, cysteine 442–cysteine 448, cysteine 447–cysteine 473, cysteine 460–cysteine 480, cysteine 467–cysteine 492, cysteine 467–cysteine 499, cysteine 492–cysteine 504, cysteine 499–cysteine 504, cysteine 511–cysteine 526, cysteine 511–cysteine 561, cysteine 526–cysteine 572, cysteine 539–cysteine 549, cysteine 549–cysteine 556, cysteine 556–cysteine 598, cysteine 561–cysteine 572, cysteine 592–cysteine 603, and cysteine 598–cysteine 603. A D/ECD-tripeptide motif is present at residues 466-468; sequence ECD. Positions 468, 469, 471, 483, and 484 each coordinate Ca(2+).

The protein belongs to the venom metalloproteinase (M12B) family. P-III subfamily. P-IIIb sub-subfamily. Monomer. Requires Zn(2+) as cofactor. In terms of tissue distribution, expressed by the venom gland.

The protein localises to the secreted. It catalyses the reaction Cleavage of 5-His-|-Leu-6, 10-His-|-Leu-11, 14-Ala-|-Leu-15, 16-Tyr-|-Leu-17 and 24-Phe-|-Phe-25 in insulin B chain.. Inhibited by EDTA and EGTA. Has caseinolytic activity. Causes hemorrhage on rabbit skin and causes myonecrosis in mouse tibialis anterior muscle. In terms of biological role, inhibits platelet aggregation. This is Zinc metalloproteinase-disintegrin-like bothropasin from Bothrops jararaca (Jararaca).